A 124-amino-acid polypeptide reads, in one-letter code: Fluoride-specific ion channel FluC (124 aa).

A run of 3 helical transmembrane segments spans residues 20-40 (LLSI…TLLV), 60-80 (ISPE…TTFS), and 102-122 (VLLN…LIFS). Residues glycine 74 and threonine 77 each coordinate Na(+).

It belongs to the fluoride channel Fluc/FEX (TC 1.A.43) family.

It localises to the cell inner membrane. The catalysed reaction is fluoride(in) = fluoride(out). With respect to regulation, na(+) is not transported, but it plays an essential structural role and its presence is essential for fluoride channel function. In terms of biological role, fluoride-specific ion channel. Important for reducing fluoride concentration in the cell, thus reducing its toxicity. The polypeptide is Fluoride-specific ion channel FluC (Shewanella frigidimarina (strain NCIMB 400)).